A 126-amino-acid chain; its full sequence is Probable 4-amino-4-deoxy-L-arabinose-phosphoundecaprenol flippase subunit ArnF (126 aa).

The Cytoplasmic segment spans residues 1–4; sequence MKGY. The chain crosses the membrane as a helical span at residues 5 to 25; it reads IWGLISVLLVTIAQLLLKWGV. Topologically, residues 26 to 49 are periplasmic; the sequence is VNLPALNLGLHWFDIEWLWSHRHS. A helical transmembrane segment spans residues 50–70; that stretch reads LVAVMAGLAGYLLSMLCWLFT. Residues 71-79 are Cytoplasmic-facing; that stretch reads LKYLPLNKA. Residues 80–100 form a helical membrane-spanning segment; the sequence is YPLISLSYVFVYLMVALLPWF. Residues 101 to 102 lie on the Periplasmic side of the membrane; sequence NE. Residues 103–123 traverse the membrane as a helical segment; that stretch reads TITLLKTAGVIFILYGVWLIS. The Cytoplasmic segment spans residues 124-126; the sequence is RPE.

It belongs to the ArnF family. Heterodimer of ArnE and ArnF.

The protein localises to the cell inner membrane. It participates in bacterial outer membrane biogenesis; lipopolysaccharide biosynthesis. Its function is as follows. Translocates 4-amino-4-deoxy-L-arabinose-phosphoundecaprenol (alpha-L-Ara4N-phosphoundecaprenol) from the cytoplasmic to the periplasmic side of the inner membrane. The protein is Probable 4-amino-4-deoxy-L-arabinose-phosphoundecaprenol flippase subunit ArnF of Photorhabdus laumondii subsp. laumondii (strain DSM 15139 / CIP 105565 / TT01) (Photorhabdus luminescens subsp. laumondii).